Consider the following 90-residue polypeptide: Large ribosomal subunit protein bL31 (90 aa).

The interval 71–90 is disordered; that stretch reads KVKKFPSNADNQKEPAEEQE. Residues 81–90 show a composition bias toward basic and acidic residues; the sequence is NQKEPAEEQE.

The protein belongs to the bacterial ribosomal protein bL31 family. Type A subfamily. As to quaternary structure, part of the 50S ribosomal subunit.

Its function is as follows. Binds the 23S rRNA. The chain is Large ribosomal subunit protein bL31 (rpmE) from Aster yellows witches'-broom phytoplasma (strain AYWB).